A 554-amino-acid chain; its full sequence is Arginine--tRNA ligase (554 aa).

Positions 129–139 (ANPTGPLHIGH) match the 'HIGH' region motif.

It belongs to the class-I aminoacyl-tRNA synthetase family. Monomer.

The protein resides in the cytoplasm. The catalysed reaction is tRNA(Arg) + L-arginine + ATP = L-arginyl-tRNA(Arg) + AMP + diphosphate. The chain is Arginine--tRNA ligase from Geobacter sp. (strain M21).